Reading from the N-terminus, the 75-residue chain is MKELLEKILRGIVKHPEEVVVMEFDEEGKKVYEIVVNEEDVGQVIGKDGRTIKSLKILLSALMGDSKEITIKVVR.

A KH domain is found at 29–75 (KKVYEIVVNEEDVGQVIGKDGRTIKSLKILLSALMGDSKEITIKVVR).

The protein belongs to the KhpA RNA-binding protein family. As to quaternary structure, forms a complex with KhpB.

It localises to the cytoplasm. Functionally, a probable RNA chaperone. Forms a complex with KhpB which binds to cellular RNA and controls its expression. Plays a role in peptidoglycan (PG) homeostasis and cell length regulation. The protein is RNA-binding protein KhpA of Thermotoga maritima (strain ATCC 43589 / DSM 3109 / JCM 10099 / NBRC 100826 / MSB8).